The sequence spans 239 residues: MPSHYYLIIPASGVGVRMHPEKDGLNEQPKQYLKLDNGLTILDQTLKTLLSINQIKSCVIAIKNKDHLFAKSAFNNHPKLLTIVTGGKERMYSVLNALKALIDFAKDDDWVLVHDSVRPCVKASEIINLMKQLKHHATGGLLATKVVDTIKQADNNIINTTIDRSNLWQAQTPQMYRFSVLLKALNTAIKDGINITDETSAIEHLGLESILVKSSKSNIKVTNPEDLILANFYLNQHQK.

It belongs to the IspD/TarI cytidylyltransferase family. IspD subfamily.

It carries out the reaction 2-C-methyl-D-erythritol 4-phosphate + CTP + H(+) = 4-CDP-2-C-methyl-D-erythritol + diphosphate. The protein operates within isoprenoid biosynthesis; isopentenyl diphosphate biosynthesis via DXP pathway; isopentenyl diphosphate from 1-deoxy-D-xylulose 5-phosphate: step 2/6. Its function is as follows. Catalyzes the formation of 4-diphosphocytidyl-2-C-methyl-D-erythritol from CTP and 2-C-methyl-D-erythritol 4-phosphate (MEP). This is 2-C-methyl-D-erythritol 4-phosphate cytidylyltransferase from Ruthia magnifica subsp. Calyptogena magnifica.